Consider the following 50-residue polypeptide: Photosystem II reaction center protein M (50 aa).

Residues 7-27 (GFVASLLFVGVPTIFLIGLFI) traverse the membrane as a helical segment.

Belongs to the PsbM family. As to quaternary structure, PSII is composed of 1 copy each of membrane proteins PsbA, PsbB, PsbC, PsbD, PsbE, PsbF, PsbH, PsbI, PsbJ, PsbK, PsbL, PsbM, PsbT, PsbX, PsbY, Psb30/Ycf12, peripheral proteins PsbO, CyanoQ (PsbQ), PsbU, PsbV and a large number of cofactors. It forms dimeric complexes.

Its subcellular location is the cellular thylakoid membrane. Functionally, one of the components of the core complex of photosystem II (PSII). PSII is a light-driven water:plastoquinone oxidoreductase that uses light energy to abstract electrons from H(2)O, generating O(2) and a proton gradient subsequently used for ATP formation. It consists of a core antenna complex that captures photons, and an electron transfer chain that converts photonic excitation into a charge separation. This subunit is found at the monomer-monomer interface. This chain is Photosystem II reaction center protein M, found in Prochlorococcus marinus (strain MIT 9301).